We begin with the raw amino-acid sequence, 272 residues long: Regulatory factor X-associated protein (272 aa).

Disordered stretches follow at residues 1-20 (MEAQ…GVPH), 74-142 (LCEG…KTCT), and 175-195 (KKKK…GSAG). A compositionally biased stretch (acidic residues) spans 79 to 94 (GDGEEEAGEDEADLLD). Residues 163-178 (KKHRNKMYKDKYKKKK) carry the Nuclear localization signal motif. K198 is covalently cross-linked (Glycyl lysine isopeptide (Lys-Gly) (interchain with G-Cter in SUMO2)). The segment at 214–270 (TGSFGDRPARPTLLEQVLNQKRLSLLRSPEVVQFLQKQQQLLNQQVLEQRQQQFPGT) is C-terminal domain.

The RFX heterotetrameric complex consists of 2 molecules of RFX5 and one each of RFXAP and RFX-B/RFXANK; with each subunit representing a separate complementation group. RFX forms cooperative DNA binding complexes with X2BP and CBF/NF-Y. RFX associates with CIITA to form an active transcriptional complex. In terms of processing, phosphorylated. As to expression, ubiquitous.

It is found in the nucleus. Its function is as follows. Part of the RFX complex that binds to the X-box of MHC II promoters. The sequence is that of Regulatory factor X-associated protein (RFXAP) from Homo sapiens (Human).